The following is a 61-amino-acid chain: MLNIFSLICICLNSALHSSSFFFAKLPEAYAFFNPIVDFMPVIPVLFFLLALVWQAAVSFR.

Positions 1–24 (MLNIFSLICICLNSALHSSSFFFA) are excised as a propeptide. The chain crosses the membrane as a helical span at residues 32 to 52 (FFNPIVDFMPVIPVLFFLLAL).

This sequence belongs to the PsbK family. PSII is composed of 1 copy each of membrane proteins PsbA, PsbB, PsbC, PsbD, PsbE, PsbF, PsbH, PsbI, PsbJ, PsbK, PsbL, PsbM, PsbT, PsbX, PsbY, PsbZ, Psb30/Ycf12, at least 3 peripheral proteins of the oxygen-evolving complex and a large number of cofactors. It forms dimeric complexes.

It is found in the plastid. The protein resides in the chloroplast thylakoid membrane. Functionally, one of the components of the core complex of photosystem II (PSII). PSII is a light-driven water:plastoquinone oxidoreductase that uses light energy to abstract electrons from H(2)O, generating O(2) and a proton gradient subsequently used for ATP formation. It consists of a core antenna complex that captures photons, and an electron transfer chain that converts photonic excitation into a charge separation. The protein is Photosystem II reaction center protein K of Drimys granadensis.